Here is a 285-residue protein sequence, read N- to C-terminus: NAD kinase (285 aa).

Aspartate 66 acts as the Proton acceptor in catalysis. NAD(+)-binding positions include 66-67, 137-138, arginine 148, arginine 165, aspartate 167, and 178-183; these read DG, ND, and TAYSLS.

It belongs to the NAD kinase family. A divalent metal cation serves as cofactor.

It localises to the cytoplasm. It catalyses the reaction NAD(+) + ATP = ADP + NADP(+) + H(+). Involved in the regulation of the intracellular balance of NAD and NADP, and is a key enzyme in the biosynthesis of NADP. Catalyzes specifically the phosphorylation on 2'-hydroxyl of the adenosine moiety of NAD to yield NADP. This is NAD kinase from Chlorobium phaeobacteroides (strain BS1).